The chain runs to 276 residues: Orotidine 5'-phosphate decarboxylase (276 aa).

Substrate-binding positions include Asp40, Lys62–His64, Asp93–Thr102, Tyr228, and Arg246. Lys95 functions as the Proton donor in the catalytic mechanism.

Belongs to the OMP decarboxylase family.

It carries out the reaction orotidine 5'-phosphate + H(+) = UMP + CO2. Its pathway is pyrimidine metabolism; UMP biosynthesis via de novo pathway; UMP from orotate: step 2/2. This chain is Orotidine 5'-phosphate decarboxylase (pyrG), found in Penicillium nalgiovense.